The sequence spans 149 residues: uncharacterized protein (149 aa).

A Phosphoserine modification is found at Ser21. The next 2 membrane-spanning stretches (helical) occupy residues 48 to 68 (FMEF…WVLG) and 72 to 92 (VLAA…FQLV). Residues 116 to 149 (AEEVPPPSYPSLEEENEGNEEIEESEEMNTLLSK) are disordered. A compositionally biased stretch (acidic residues) spans 127–142 (LEEENEGNEEIEESEE).

It is found in the membrane. This is an uncharacterized protein from Schizosaccharomyces pombe (strain 972 / ATCC 24843) (Fission yeast).